Here is a 218-residue protein sequence, read N- to C-terminus: Pyridoxine/pyridoxamine 5'-phosphate oxidase (218 aa).

Substrate is bound by residues 14 to 17 (RREY) and Lys-72. FMN-binding positions include 67-72 (RIVLLK), 82-83 (YT), Arg-88, Lys-89, and Gln-111. Residues Tyr-129, Arg-133, and Ser-137 each coordinate substrate. FMN-binding positions include 146–147 (QS) and Trp-191. Substrate is bound at residue 197–199 (RLH). Arg-201 is an FMN binding site.

This sequence belongs to the pyridoxamine 5'-phosphate oxidase family. In terms of assembly, homodimer. FMN serves as cofactor.

It catalyses the reaction pyridoxamine 5'-phosphate + O2 + H2O = pyridoxal 5'-phosphate + H2O2 + NH4(+). It carries out the reaction pyridoxine 5'-phosphate + O2 = pyridoxal 5'-phosphate + H2O2. It participates in cofactor metabolism; pyridoxal 5'-phosphate salvage; pyridoxal 5'-phosphate from pyridoxamine 5'-phosphate: step 1/1. It functions in the pathway cofactor metabolism; pyridoxal 5'-phosphate salvage; pyridoxal 5'-phosphate from pyridoxine 5'-phosphate: step 1/1. Catalyzes the oxidation of either pyridoxine 5'-phosphate (PNP) or pyridoxamine 5'-phosphate (PMP) into pyridoxal 5'-phosphate (PLP). This is Pyridoxine/pyridoxamine 5'-phosphate oxidase from Citrobacter koseri (strain ATCC BAA-895 / CDC 4225-83 / SGSC4696).